A 500-amino-acid chain; its full sequence is 4-aminobutyrate aminotransferase, mitochondrial (500 aa).

Residues 1-27 (MAFLLTTRRLVCSSQKNLHLFTPGSRY) constitute a mitochondrion transit peptide. C163 serves as a coordination point for [2Fe-2S] cluster. Pyridoxal 5'-phosphate is bound at residue 164-165 (GS). C166 is a [2Fe-2S] cluster binding site. Position 220 (R220) interacts with substrate. The residue at position 231 (K231) is an N6-succinyllysine. K252 carries the post-translational modification N6-acetyllysine; alternate. K252 carries the post-translational modification N6-succinyllysine; alternate. Residues K279 and K318 each carry the N6-acetyllysine modification. Position 357 is an N6-(pyridoxal phosphate)lysine (K357). Pyridoxal 5'-phosphate is bound at residue T381. K413 carries the N6-acetyllysine; alternate modification. N6-succinyllysine; alternate is present on K413. An N6-acetyllysine mark is found at K452 and K470.

It belongs to the class-III pyridoxal-phosphate-dependent aminotransferase family. As to quaternary structure, homodimer; disulfide-linked. Pyridoxal 5'-phosphate serves as cofactor. Requires [2Fe-2S] cluster as cofactor.

The protein resides in the mitochondrion matrix. The catalysed reaction is 4-aminobutanoate + 2-oxoglutarate = succinate semialdehyde + L-glutamate. The enzyme catalyses (S)-3-amino-2-methylpropanoate + 2-oxoglutarate = 2-methyl-3-oxopropanoate + L-glutamate. Catalyzes the conversion of gamma-aminobutyrate and L-beta-aminoisobutyrate to succinate semialdehyde and methylmalonate semialdehyde, respectively. Can also convert delta-aminovalerate and beta-alanine. In Rattus norvegicus (Rat), this protein is 4-aminobutyrate aminotransferase, mitochondrial.